The chain runs to 1031 residues: Putative glycine dehydrogenase (decarboxylating), mitochondrial (1031 aa).

The N-terminal 49 residues, 1–49 (MFDSFMKRNQLALIMFRACSKLQYHGVNTSLSRHLFLAKRNLSISSACL), are a transit peptide targeting the mitochondrion. An N6-(pyridoxal phosphate)lysine modification is found at Lys783.

This sequence belongs to the GcvP family. It depends on pyridoxal 5'-phosphate as a cofactor.

It localises to the mitochondrion. It catalyses the reaction N(6)-[(R)-lipoyl]-L-lysyl-[glycine-cleavage complex H protein] + glycine + H(+) = N(6)-[(R)-S(8)-aminomethyldihydrolipoyl]-L-lysyl-[glycine-cleavage complex H protein] + CO2. Functionally, the glycine cleavage system catalyzes the degradation of glycine. The P protein binds the alpha-amino group of glycine through its pyridoxal phosphate cofactor; CO(2) is released and the remaining methylamine moiety is then transferred to the lipoamide cofactor of the H protein. This is Putative glycine dehydrogenase (decarboxylating), mitochondrial (gcv2) from Schizosaccharomyces pombe (strain 972 / ATCC 24843) (Fission yeast).